Reading from the N-terminus, the 274-residue chain is NAD(P)H dehydrogenase [quinone] 1 (274 aa).

Residues histidine 12, 18 to 19 (FN), and glutamine 67 each bind FAD. Serine 82 carries the phosphoserine modification. 104-107 (LQWF) contacts FAD. A substrate-binding site is contributed by 126 to 128 (AYT). FAD contacts are provided by residues 148 to 151 (TTGG), tyrosine 156, and arginine 201. The important for apoenzyme conformational stability stretch occupies residues 225–274 (PSSLFDLNFQAGFLMKKEVQDEEKNKKFGLSVGHHLGKSIPTDNQIKARK). Residues lysine 250 and lysine 251 each participate in a glycyl lysine isopeptide (Lys-Gly) (interchain with G-Cter in SUMO2) cross-link.

It belongs to the NAD(P)H dehydrogenase (quinone) family. In terms of assembly, homodimer. Interacts with PDLIM4 isoform 2; this interaction stabilizes PDLIM4 isoform 2 in response to oxidative stress and protects it from ubiquitin-independent degradation by the core 20S proteasome. Interacts with TP73 (via SAM domain); this interaction is NADH-dependent, stabilizes TP73 in response to oxidative stress and protects it from ubiquitin-independent degradation by the 20S proteasome. Interacts with TP53; this interaction is NADH-dependent, stabilizes TP53 in response to oxidative stress and protects it from ubiquitin-independent degradation by the 20S proteasome. The cofactor is FAD.

It is found in the cytoplasm. The protein resides in the cytosol. It carries out the reaction a quinone + NADH + H(+) = a quinol + NAD(+). The catalysed reaction is a quinone + NADPH + H(+) = a quinol + NADP(+). It catalyses the reaction ubiquinone-10 + NADH + H(+) = ubiquinol-10 + NAD(+). The enzyme catalyses menadione + NADH + H(+) = menadiol + NAD(+). In terms of biological role, flavin-containing quinone reductase that catalyzes two-electron reduction of quinones to hydroquinones using either NADH or NADPH as electron donors. In a ping-pong kinetic mechanism, the electrons are sequentially transferred from NAD(P)H to flavin cofactor and then from reduced flavin to the quinone, bypassing the formation of semiquinone and reactive oxygen species. Regulates cellular redox state primarily through quinone detoxification. Reduces components of plasma membrane redox system such as coenzyme Q and vitamin quinones, producing antioxidant hydroquinone forms. In the process may function as superoxide scavenger to prevent hydroquinone oxidation and facilitate excretion. Alternatively, can activate quinones and their derivatives by generating redox reactive hydroquinones with DNA cross-linking antitumor potential. Acts as a gatekeeper of the core 20S proteasome known to degrade proteins with unstructured regions. Upon oxidative stress, interacts with tumor suppressors TP53 and TP73 in a NADH-dependent way and inhibits their ubiquitin-independent degradation by the 20S proteasome. This chain is NAD(P)H dehydrogenase [quinone] 1 (NQO1), found in Pongo abelii (Sumatran orangutan).